A 340-amino-acid chain; its full sequence is MLVTEETLLGKSLDELTQWVEKQGQPTYRGKQLHQWLYEKGARSLDEISVFPKTWREKLINYPIGRSTIDYRTVAPDATRKYLLCLGDGLIIETVGIPTAKRLTVCVSSQVGCPMACDFCATGKGGYQRHLRAHEIVDQVLTVQEDFQRRVSHVVFMGMGEPLLNLEEVVKSVKILNQDIGIGQRSLTISTVGLPQKIIQLAHHHLQVTLAVSLHASNQPLRETLIPSAQHYTLKNLLADCREYVNITGRRISFEYVLLGGVNDLPEQAIELANLLKGFQSHVNLIPYNPIDEADYQRPNQTQIQTFVQVLEQHKIAVSVRYSRGLEANAACGQLRASQR.

The active-site Proton acceptor is the glutamate 93. Positions 99 to 327 constitute a Radical SAM core domain; it reads TAKRLTVCVS…VSVRYSRGLE (229 aa). A disulfide bridge connects residues cysteine 106 and cysteine 332. The [4Fe-4S] cluster site is built by cysteine 113, cysteine 117, and cysteine 120. S-adenosyl-L-methionine is bound by residues 160-161, serine 190, 213-215, and asparagine 289; these read GE and SLH. The active-site S-methylcysteine intermediate is cysteine 332.

It belongs to the radical SAM superfamily. RlmN family. Requires [4Fe-4S] cluster as cofactor.

It is found in the cytoplasm. It carries out the reaction adenosine(2503) in 23S rRNA + 2 reduced [2Fe-2S]-[ferredoxin] + 2 S-adenosyl-L-methionine = 2-methyladenosine(2503) in 23S rRNA + 5'-deoxyadenosine + L-methionine + 2 oxidized [2Fe-2S]-[ferredoxin] + S-adenosyl-L-homocysteine. The enzyme catalyses adenosine(37) in tRNA + 2 reduced [2Fe-2S]-[ferredoxin] + 2 S-adenosyl-L-methionine = 2-methyladenosine(37) in tRNA + 5'-deoxyadenosine + L-methionine + 2 oxidized [2Fe-2S]-[ferredoxin] + S-adenosyl-L-homocysteine. Functionally, specifically methylates position 2 of adenine 2503 in 23S rRNA and position 2 of adenine 37 in tRNAs. This Rippkaea orientalis (strain PCC 8801 / RF-1) (Cyanothece sp. (strain PCC 8801)) protein is Probable dual-specificity RNA methyltransferase RlmN.